We begin with the raw amino-acid sequence, 51 residues long: MQQLQNVIESAFERRADITPANVDTVTREAVNQVISLLDSGALRVAKKIDG.

The protein belongs to the transferase hexapeptide repeat family. As to quaternary structure, homotrimer.

It is found in the cytoplasm. It carries out the reaction (S)-2,3,4,5-tetrahydrodipicolinate + succinyl-CoA + H2O = (S)-2-succinylamino-6-oxoheptanedioate + CoA. It functions in the pathway amino-acid biosynthesis; L-lysine biosynthesis via DAP pathway; LL-2,6-diaminopimelate from (S)-tetrahydrodipicolinate (succinylase route): step 1/3. The protein is 2,3,4,5-tetrahydropyridine-2,6-dicarboxylate N-succinyltransferase (dapD) of Klebsiella oxytoca.